The primary structure comprises 269 residues: MFDFMTLEKVREKGPLVHNITNIVVANDSANGLLAIGASPIMASAKEEMDELAKMADVLVINIGTLDGELVTAMKIAGRAANVAGTPVVLDPVGVGATSYRRKVVQELLAEIQFAAIRGNAGELAAIAGEAWEAKGVDAGVGSADVLSIAGKVANEWSTVVIISGEVDVISDGTRFAKVANGSALLPRITGSGCLLSAVCGSFIAVQDDAFRASVEACASYAVASEYAEMELERKLPGSFRPLFLDALASWSVEKTRAKAKIQESGEHK.

M42 is a binding site for substrate. ATP-binding residues include R118 and S164. Substrate is bound at residue G191.

Belongs to the Thz kinase family. Mg(2+) serves as cofactor.

It catalyses the reaction 5-(2-hydroxyethyl)-4-methylthiazole + ATP = 4-methyl-5-(2-phosphooxyethyl)-thiazole + ADP + H(+). It functions in the pathway cofactor biosynthesis; thiamine diphosphate biosynthesis; 4-methyl-5-(2-phosphoethyl)-thiazole from 5-(2-hydroxyethyl)-4-methylthiazole: step 1/1. Catalyzes the phosphorylation of the hydroxyl group of 4-methyl-5-beta-hydroxyethylthiazole (THZ). This is Hydroxyethylthiazole kinase from Listeria monocytogenes serovar 1/2a (strain ATCC BAA-679 / EGD-e).